The primary structure comprises 185 residues: Elongation factor P (185 aa).

This sequence belongs to the elongation factor P family.

Its subcellular location is the cytoplasm. Its pathway is protein biosynthesis; polypeptide chain elongation. Its function is as follows. Involved in peptide bond synthesis. Stimulates efficient translation and peptide-bond synthesis on native or reconstituted 70S ribosomes in vitro. Probably functions indirectly by altering the affinity of the ribosome for aminoacyl-tRNA, thus increasing their reactivity as acceptors for peptidyl transferase. This is Elongation factor P from Finegoldia magna (strain ATCC 29328 / DSM 20472 / WAL 2508) (Peptostreptococcus magnus).